A 326-amino-acid chain; its full sequence is Undecaprenyl-diphosphatase (326 aa).

The next 9 helical transmembrane spans lie at 11–31 (AFSLSVAIAVVYHQAWGIAVA), 42–62 (TGVISNGISINLFQAFVLGFI), 90–110 (GVAFTAVIQLGSIGAVFWYFW), 138–158 (LGIGLGTIPIVFFGLLMKLLV), 165–185 (FFRSLSTIAIASIVMALLLAL), 212–232 (ALALIPGVSRSGSTLTAGLFI), 242–262 (FSFLLGIPAITIAGLVELKGL), 272–292 (ILPLIVGTISSAVFSYLAIAW), and 304–324 (IFVWYRLIFGVVILTALGMGF).

The protein belongs to the UppP family.

The protein localises to the cell inner membrane. It carries out the reaction di-trans,octa-cis-undecaprenyl diphosphate + H2O = di-trans,octa-cis-undecaprenyl phosphate + phosphate + H(+). Functionally, catalyzes the dephosphorylation of undecaprenyl diphosphate (UPP). Confers resistance to bacitracin. The chain is Undecaprenyl-diphosphatase from Synechocystis sp. (strain ATCC 27184 / PCC 6803 / Kazusa).